A 497-amino-acid polypeptide reads, in one-letter code: Protein nucleotidyltransferase YdiU (497 aa).

ATP is bound by residues Gly88, Gly90, Arg91, Lys110, Asp122, Gly123, Arg173, and Arg180. The active-site Proton acceptor is the Asp249. Positions 250 and 259 each coordinate Mg(2+). Asp259 contributes to the ATP binding site.

It belongs to the SELO family. Mg(2+) serves as cofactor. The cofactor is Mn(2+).

The enzyme catalyses L-seryl-[protein] + ATP = 3-O-(5'-adenylyl)-L-seryl-[protein] + diphosphate. It carries out the reaction L-threonyl-[protein] + ATP = 3-O-(5'-adenylyl)-L-threonyl-[protein] + diphosphate. It catalyses the reaction L-tyrosyl-[protein] + ATP = O-(5'-adenylyl)-L-tyrosyl-[protein] + diphosphate. The catalysed reaction is L-histidyl-[protein] + UTP = N(tele)-(5'-uridylyl)-L-histidyl-[protein] + diphosphate. The enzyme catalyses L-seryl-[protein] + UTP = O-(5'-uridylyl)-L-seryl-[protein] + diphosphate. It carries out the reaction L-tyrosyl-[protein] + UTP = O-(5'-uridylyl)-L-tyrosyl-[protein] + diphosphate. In terms of biological role, nucleotidyltransferase involved in the post-translational modification of proteins. It can catalyze the addition of adenosine monophosphate (AMP) or uridine monophosphate (UMP) to a protein, resulting in modifications known as AMPylation and UMPylation. This is Protein nucleotidyltransferase YdiU from Methylorubrum extorquens (strain CM4 / NCIMB 13688) (Methylobacterium extorquens).